The primary structure comprises 1284 residues: Integrator complex subunit 6 (1284 aa).

The 132-residue stretch at 3–134 (IILFLVDTSS…PSVIIVITDG (132 aa)) folds into the VWFA domain. 4 disordered regions span residues 653–824 (DVAP…GMSN), 864–895 (ETGE…SPAV), 1053–1086 (TSSG…DDHA), and 1125–1180 (NNSS…PGQS). The span at 690–721 (SPGGGSGPGMPGMPGMGGGMSGLMLGAGGSGG) shows a compositional bias: gly residues. Low complexity-rich tracts occupy residues 752-781 (DSRS…SSIS) and 803-824 (NSNS…GMSN). Residues 879–890 (GASSANEPSSIG) show a composition bias toward polar residues. Composition is skewed to low complexity over residues 1053–1074 (TSSG…NGST) and 1125–1141 (NNSS…LSNN). The segment covering 1159–1171 (INSSCGSSPTHNN) has biased composition (polar residues).

It belongs to the Integrator subunit 6 family. Belongs to the multiprotein complex Integrator, at least composed of IntS1, IntS2, IntS3, IntS4, omd/IntS5, IntS6, defl/IntS7, IntS8, IntS9, IntS10, IntS11, IntS12, asun/IntS13, IntS14 and IntS15. The core complex associates with protein phosphatase 2A subunits mts/PP2A and Pp2A-29B, to form the Integrator-PP2A (INTAC) complex.

It localises to the nucleus. Its function is as follows. Component of the integrator complex, a multiprotein complex that terminates RNA polymerase II (Pol II) transcription in the promoter-proximal region of genes. The integrator complex provides a quality checkpoint during transcription elongation by driving premature transcription termination of transcripts that are unfavorably configured for transcriptional elongation: the complex terminates transcription by (1) catalyzing dephosphorylation of the C-terminal domain (CTD) of Pol II subunit Polr2A/Rbp1 and Spt5, and (2) degrading the exiting nascent RNA transcript via endonuclease activity. The integrator complex is also involved in the 3'-end processing of the U7 snRNA, and also the spliceosomal snRNAs U1, U2, U4 and U5. Within the integrator complex, IntS6 acts as a substrate adapter for protein phosphatase 2A (PP2A). The sequence is that of Integrator complex subunit 6 from Drosophila melanogaster (Fruit fly).